The primary structure comprises 683 residues: U4/U6 small nuclear ribonucleoprotein Prp3 (683 aa).

The PWI domain occupies 1–87 (MALSKRELDE…HSKSSSDRSR (87 aa)). Positions 73–107 (GRSSRHSKSSSDRSRKRELKEVFGDDSEISKESSG) are enriched in basic and acidic residues. Positions 73 to 135 (GRSSRHSKSS…IPGPPSESPG (63 aa)) are disordered. A Glycyl lysine isopeptide (Lys-Gly) (interchain with G-Cter in SUMO2) cross-link involves residue Lys139. Residues 153–183 (IEERKKQLSFISPPTPQPKTPSSSQPERLPI) are disordered. Residue Ser164 is modified to Phosphoserine. At Thr167 the chain carries Phosphothreonine. Residues Lys244 and Lys252 each participate in a glycyl lysine isopeptide (Lys-Gly) (interchain with G-Cter in SUMO2) cross-link. The interval 416–550 (NLVEHPAQLN…VHISVYRVRN (135 aa)) is mediates interaction with SART3. Ser619 is modified (phosphoserine).

Component of the precatalytic spliceosome (spliceosome B complex). Component of the U4/U6-U5 tri-snRNP complex, a building block of the precatalytic spliceosome (spliceosome B complex). The U4/U6-U5 tri-snRNP complex is composed of the U4, U6 and U5 snRNAs and at least PRPF3, PRPF4, PRPF6, PRPF8, PRPF31, SNRNP200, TXNL4A, SNRNP40, SNRPB, SNRPD1, SNRPD2, SNRPD3, SNRPE, SNRPF, SNRPG, DDX23, CD2BP2, PPIH, SNU13, EFTUD2, SART1 and USP39, plus LSM2, LSM3, LSM4, LSM5, LSM6, LSM7 and LSM8. Interacts directly with PRPF4. Part of a heteromeric complex containing PPIH, PRPF3 and PRPF4 that is stable in the absence of RNA. Interacts with SART3; the interaction is direct and recruits the deubiquitinase USP4 to PRPF3. Interacts with PRPF19. Interacts ('Lys-63'-linked polyubiquitinated) with PRPF8 (via the MPN (JAB/Mov34) domain); may stabilize the U4/U6-U5 tri-snRNP complex. Interacts with ERCC6. Ubiquitinated. Undergoes 'Lys-63'-linked polyubiquitination by PRPF19 and deubiquitination by USP4. 'Lys-63'-linked ubiquitination increases the affinity for PRPF8 and may regulate the assembly of the U4/U6-U5 tri-snRNP complex. Highly expressed in retina, liver, kidney and blood. Detected at lower levels in heart and brain.

The protein localises to the nucleus. The protein resides in the nucleus speckle. Plays a role in pre-mRNA splicing as component of the U4/U6-U5 tri-snRNP complex that is involved in spliceosome assembly, and as component of the precatalytic spliceosome (spliceosome B complex). The polypeptide is U4/U6 small nuclear ribonucleoprotein Prp3 (PRPF3) (Homo sapiens (Human)).